Reading from the N-terminus, the 216-residue chain is Redox-sensing transcriptional repressor Rex (216 aa).

Residues 20-59 (QYYRLFKSLVEENVTRTNSQLISEKIGVDAATIRRDFSLF) constitute a DNA-binding region (H-T-H motif). 94–99 (GVGNLG) contacts NAD(+).

Belongs to the transcriptional regulatory Rex family. As to quaternary structure, homodimer.

Its subcellular location is the cytoplasm. Its function is as follows. Modulates transcription in response to changes in cellular NADH/NAD(+) redox state. The polypeptide is Redox-sensing transcriptional repressor Rex (Lactococcus lactis subsp. lactis (strain IL1403) (Streptococcus lactis)).